Reading from the N-terminus, the 509-residue chain is ATP synthase subunit alpha, mitochondrial (509 aa).

Residue 171–178 coordinates ATP; sequence GDRQTGKT.

This sequence belongs to the ATPase alpha/beta chains family. In terms of assembly, F-type ATPases have 2 components, CF(1) - the catalytic core - and CF(0) - the membrane proton channel. CF(1) has five subunits: alpha(3), beta(3), gamma(1), delta(1), epsilon(1). CF(0) has three main subunits: a, b and c.

It localises to the mitochondrion. Its subcellular location is the mitochondrion inner membrane. In terms of biological role, mitochondrial membrane ATP synthase (F(1)F(0) ATP synthase or Complex V) produces ATP from ADP in the presence of a proton gradient across the membrane which is generated by electron transport complexes of the respiratory chain. F-type ATPases consist of two structural domains, F(1) - containing the extramembraneous catalytic core, and F(0) - containing the membrane proton channel, linked together by a central stalk and a peripheral stalk. During catalysis, ATP synthesis in the catalytic domain of F(1) is coupled via a rotary mechanism of the central stalk subunits to proton translocation. Subunits alpha and beta form the catalytic core in F(1). Rotation of the central stalk against the surrounding alpha(3)beta(3) subunits leads to hydrolysis of ATP in three separate catalytic sites on the beta subunits. Subunit alpha does not bear the catalytic high-affinity ATP-binding sites. This Oryza sativa subsp. indica (Rice) protein is ATP synthase subunit alpha, mitochondrial (ATPA).